Consider the following 93-residue polypeptide: uncharacterized protein (93 aa).

The interval 73–93 is disordered; sequence KWTVSGPVKQDTGKTDPAEKN. Over residues 83-93 the composition is skewed to basic and acidic residues; the sequence is DTGKTDPAEKN.

This is an uncharacterized protein from Rhodobacter capsulatus (Rhodopseudomonas capsulata).